The primary structure comprises 2278 residues: Protein Ycf2 (2278 aa).

Residue 1632-1639 (GSIGTGRS) participates in ATP binding.

Belongs to the Ycf2 family.

It localises to the plastid. The protein localises to the chloroplast stroma. Probable ATPase of unknown function. Its presence in a non-photosynthetic plant (Epifagus virginiana) and experiments in tobacco indicate that it has an essential function which is probably not related to photosynthesis. The polypeptide is Protein Ycf2 (Solanum bulbocastanum (Wild potato)).